Reading from the N-terminus, the 390-residue chain is Queuine tRNA-ribosyltransferase (390 aa).

The active-site Proton acceptor is Asp-92. Residues 92 to 96 (DSGGF), Asp-146, Gln-195, and Gly-222 each bind substrate. Residues 253-259 (GVGTPED) form an RNA binding region. Residue Asp-272 is the Nucleophile of the active site. The segment at 277-281 (TRNAR) is RNA binding; important for wobble base 34 recognition. The Zn(2+) site is built by Cys-310, Cys-312, Cys-315, and His-354.

Belongs to the queuine tRNA-ribosyltransferase family. Homodimer. Within each dimer, one monomer is responsible for RNA recognition and catalysis, while the other monomer binds to the replacement base PreQ1. Zn(2+) is required as a cofactor.

It catalyses the reaction 7-aminomethyl-7-carbaguanine + guanosine(34) in tRNA = 7-aminomethyl-7-carbaguanosine(34) in tRNA + guanine. Its pathway is tRNA modification; tRNA-queuosine biosynthesis. Functionally, catalyzes the base-exchange of a guanine (G) residue with the queuine precursor 7-aminomethyl-7-deazaguanine (PreQ1) at position 34 (anticodon wobble position) in tRNAs with GU(N) anticodons (tRNA-Asp, -Asn, -His and -Tyr). Catalysis occurs through a double-displacement mechanism. The nucleophile active site attacks the C1' of nucleotide 34 to detach the guanine base from the RNA, forming a covalent enzyme-RNA intermediate. The proton acceptor active site deprotonates the incoming PreQ1, allowing a nucleophilic attack on the C1' of the ribose to form the product. After dissociation, two additional enzymatic reactions on the tRNA convert PreQ1 to queuine (Q), resulting in the hypermodified nucleoside queuosine (7-(((4,5-cis-dihydroxy-2-cyclopenten-1-yl)amino)methyl)-7-deazaguanosine). The polypeptide is Queuine tRNA-ribosyltransferase (Paracidovorax citrulli (strain AAC00-1) (Acidovorax citrulli)).